The chain runs to 289 residues: ATP synthase gamma chain (289 aa).

This sequence belongs to the ATPase gamma chain family. As to quaternary structure, F-type ATPases have 2 components, CF(1) - the catalytic core - and CF(0) - the membrane proton channel. CF(1) has five subunits: alpha(3), beta(3), gamma(1), delta(1), epsilon(1). CF(0) has three main subunits: a, b and c.

Its subcellular location is the cell inner membrane. Its function is as follows. Produces ATP from ADP in the presence of a proton gradient across the membrane. The gamma chain is believed to be important in regulating ATPase activity and the flow of protons through the CF(0) complex. This Cereibacter sphaeroides (strain ATCC 17029 / ATH 2.4.9) (Rhodobacter sphaeroides) protein is ATP synthase gamma chain.